A 506-amino-acid polypeptide reads, in one-letter code: Anaerobic nitric oxide reductase transcription regulator NorR (506 aa).

Asp57 is modified (4-aspartylphosphate). Positions 187-416 (MIGLSPAMTQ…LEHAIHRAVV (230 aa)) constitute a Sigma-54 factor interaction domain. ATP is bound by residues 215–222 (GETGTGKE) and 278–287 (ADNGTLFLDE). The segment at residues 481 to 500 (WAASARALETDVANLHRLAK) is a DNA-binding region (H-T-H motif).

It functions in the pathway nitrogen metabolism; nitric oxide reduction. Its function is as follows. Required for the expression of anaerobic nitric oxide (NO) reductase, acts as a transcriptional activator for at least the norVW operon. Activation also requires sigma-54. The polypeptide is Anaerobic nitric oxide reductase transcription regulator NorR (Salmonella gallinarum (strain 287/91 / NCTC 13346)).